A 579-amino-acid chain; its full sequence is Potassium-transporting ATPase potassium-binding subunit (579 aa).

Transmembrane regions (helical) follow at residues methionine 2 to leucine 22, serine 66 to phenylalanine 86, glycine 135 to isoleucine 155, valine 177 to valine 197, threonine 260 to phenylalanine 280, glycine 292 to valine 312, valine 391 to phenylalanine 411, valine 437 to leucine 457, phenylalanine 490 to phenylalanine 510, and phenylalanine 546 to leucine 566.

The protein belongs to the KdpA family. As to quaternary structure, the system is composed of three essential subunits: KdpA, KdpB and KdpC.

The protein localises to the cell membrane. In terms of biological role, part of the high-affinity ATP-driven potassium transport (or Kdp) system, which catalyzes the hydrolysis of ATP coupled with the electrogenic transport of potassium into the cytoplasm. This subunit binds the extracellular potassium ions and delivers the ions to the membrane domain of KdpB through an intramembrane tunnel. This chain is Potassium-transporting ATPase potassium-binding subunit, found in Clostridium botulinum (strain Eklund 17B / Type B).